Here is a 209-residue protein sequence, read N- to C-terminus: Dehydration-responsive element-binding protein 1F (209 aa).

The Nuclear localization signal signature appears at 14–26 (KKRAGRRVFKETR). The segment at residues 29-86 (VYRGIRRRNGDKWVCEVREPTHQRRIWLGTYPTADMAARAHDVAVLALRGRSACLNFA) is a DNA-binding region (AP2/ERF). Residues 137 to 157 (FGSGSGSGSGSEERNSSSYGF) form a disordered region.

It belongs to the AP2/ERF transcription factor family. ERF subfamily.

It localises to the nucleus. In terms of biological role, transcriptional activator that binds specifically to the DNA sequence 5'-[AG]CCGAC-3'. Binding to the C-repeat/DRE element mediates cold or dehydration-inducible transcription. CBF/DREB1 factors play a key role in freezing tolerance and cold acclimation. The protein is Dehydration-responsive element-binding protein 1F (DREB1F) of Arabidopsis thaliana (Mouse-ear cress).